Here is a 246-residue protein sequence, read N- to C-terminus: MRSGVITQKLGMTSIYNDTGERVPVTVLRLENCQVIAQRTVEKNGYTAVQLGVGLAKFEKTSKALRGHFSKALVEPKAKIVEFRVSSDNLLDVGTEITVEHFVPGQRVDVTGTSIGKGFAGVMKRHNFGGHRASHGNSITHRAHGSTGQCQDPGKVFKGKKMAGHMGQVRVTTQNVEVVSIDVDRGLILVRGAVSGSKGAWVLVRDAVKKRLPDNAPRPAGVRSPANVKVKPATPIAEVSVAEGVE.

Residue glutamine 151 is modified to N5-methylglutamine.

It belongs to the universal ribosomal protein uL3 family. In terms of assembly, part of the 50S ribosomal subunit. Forms a cluster with proteins L14 and L19. In terms of processing, methylated by PrmB.

Functionally, one of the primary rRNA binding proteins, it binds directly near the 3'-end of the 23S rRNA, where it nucleates assembly of the 50S subunit. The protein is Large ribosomal subunit protein uL3 of Bartonella bacilliformis (strain ATCC 35685 / KC583 / Herrer 020/F12,63).